A 418-amino-acid chain; its full sequence is UDP-N-acetylglucosamine 1-carboxyvinyltransferase (418 aa).

A phosphoenolpyruvate-binding site is contributed by 22–23 (KN). Arg-91 provides a ligand contact to UDP-N-acetyl-alpha-D-glucosamine. Catalysis depends on Cys-115, which acts as the Proton donor. Cys-115 carries the post-translational modification 2-(S-cysteinyl)pyruvic acid O-phosphothioketal. 2 residues coordinate UDP-N-acetyl-alpha-D-glucosamine: Asp-305 and Ile-327.

This sequence belongs to the EPSP synthase family. MurA subfamily.

The protein resides in the cytoplasm. The enzyme catalyses phosphoenolpyruvate + UDP-N-acetyl-alpha-D-glucosamine = UDP-N-acetyl-3-O-(1-carboxyvinyl)-alpha-D-glucosamine + phosphate. Its pathway is cell wall biogenesis; peptidoglycan biosynthesis. Its function is as follows. Cell wall formation. Adds enolpyruvyl to UDP-N-acetylglucosamine. This is UDP-N-acetylglucosamine 1-carboxyvinyltransferase from Aeromonas salmonicida (strain A449).